Reading from the N-terminus, the 167-residue chain is Small heat shock protein C1 (167 aa).

A sHSP domain is found at 59–167; it reads SLYESNSIKS…EQEAREIVID (109 aa).

It belongs to the small heat shock protein (HSP20) family.

The chain is Small heat shock protein C1 (hspC1) from Rickettsia conorii (strain ATCC VR-613 / Malish 7).